The following is a 155-amino-acid chain: Ribosomal RNA large subunit methyltransferase H (155 aa).

Residues Leu73, Gly104, and 123–128 (LSPLTL) contribute to the S-adenosyl-L-methionine site.

The protein belongs to the RNA methyltransferase RlmH family. Homodimer.

It is found in the cytoplasm. It catalyses the reaction pseudouridine(1915) in 23S rRNA + S-adenosyl-L-methionine = N(3)-methylpseudouridine(1915) in 23S rRNA + S-adenosyl-L-homocysteine + H(+). In terms of biological role, specifically methylates the pseudouridine at position 1915 (m3Psi1915) in 23S rRNA. The protein is Ribosomal RNA large subunit methyltransferase H of Pseudomonas putida (strain W619).